We begin with the raw amino-acid sequence, 388 residues long: Succinate--CoA ligase [ADP-forming] subunit beta (388 aa).

The 236-residue stretch at 9-244 (KQLFAEYGLP…PSQDDAREAH (236 aa)) folds into the ATP-grasp domain. Residues Lys-46, 53–55 (GRG), Glu-99, Thr-102, and Glu-107 each bind ATP. Residues Asn-199 and Asp-213 each coordinate Mg(2+). Substrate-binding positions include Asn-264 and 321 to 323 (GIV).

This sequence belongs to the succinate/malate CoA ligase beta subunit family. Heterotetramer of two alpha and two beta subunits. Mg(2+) is required as a cofactor.

It catalyses the reaction succinate + ATP + CoA = succinyl-CoA + ADP + phosphate. The catalysed reaction is GTP + succinate + CoA = succinyl-CoA + GDP + phosphate. It participates in carbohydrate metabolism; tricarboxylic acid cycle; succinate from succinyl-CoA (ligase route): step 1/1. Its function is as follows. Succinyl-CoA synthetase functions in the citric acid cycle (TCA), coupling the hydrolysis of succinyl-CoA to the synthesis of either ATP or GTP and thus represents the only step of substrate-level phosphorylation in the TCA. The beta subunit provides nucleotide specificity of the enzyme and binds the substrate succinate, while the binding sites for coenzyme A and phosphate are found in the alpha subunit. The chain is Succinate--CoA ligase [ADP-forming] subunit beta from Pseudomonas aeruginosa (strain UCBPP-PA14).